The following is a 329-amino-acid chain: Malate dehydrogenase (329 aa).

12-18 (GAAGQIG) provides a ligand contact to NAD(+). Residues Arg-93 and Arg-99 each contribute to the substrate site. NAD(+)-binding positions include Asn-106, Gln-113, and 130 to 132 (VGN). Residues Asn-132 and Arg-163 each contribute to the substrate site. His-188 functions as the Proton acceptor in the catalytic mechanism.

It belongs to the LDH/MDH superfamily. MDH type 2 family.

The catalysed reaction is (S)-malate + NAD(+) = oxaloacetate + NADH + H(+). Its activity is regulated as follows. Strongly inhibited by Hg(2+) and Zn(2+). Activated by Na(+), NH(4)(+), Ca(2+), Cu(2+) and Mg(2+). Functionally, catalyzes the reversible oxidation of malate to oxaloacetate. Exhibits remarkably higher catalytic efficiency for oxaloacetate reduction than for malate oxidation in vitro. Highly specific for NAD(H). Can also use NADPH for oxaloacetate reduction, but catalytic efficiency is 97-fold higher with NADH. No activity detected with NADP(+) and malate. The polypeptide is Malate dehydrogenase (Streptomyces avermitilis (strain ATCC 31267 / DSM 46492 / JCM 5070 / NBRC 14893 / NCIMB 12804 / NRRL 8165 / MA-4680)).